Consider the following 249-residue polypeptide: 2,3-bisphosphoglycerate-dependent phosphoglycerate mutase (249 aa).

Substrate is bound by residues 9–16 (RHGQSQWN), 22–23 (TG), R61, 88–91 (ERHY), K99, 115–116 (RR), and 184–185 (GN). H10 functions as the Tele-phosphohistidine intermediate in the catalytic mechanism. E88 acts as the Proton donor/acceptor in catalysis.

This sequence belongs to the phosphoglycerate mutase family. BPG-dependent PGAM subfamily. As to quaternary structure, homodimer.

It catalyses the reaction (2R)-2-phosphoglycerate = (2R)-3-phosphoglycerate. It participates in carbohydrate degradation; glycolysis; pyruvate from D-glyceraldehyde 3-phosphate: step 3/5. Its function is as follows. Catalyzes the interconversion of 2-phosphoglycerate and 3-phosphoglycerate. In Xanthomonas axonopodis pv. citri (strain 306), this protein is 2,3-bisphosphoglycerate-dependent phosphoglycerate mutase.